Here is a 121-residue protein sequence, read N- to C-terminus: Large ribosomal subunit protein bL12 (121 aa).

This sequence belongs to the bacterial ribosomal protein bL12 family. In terms of assembly, homodimer. Part of the ribosomal stalk of the 50S ribosomal subunit. Forms a multimeric L10(L12)X complex, where L10 forms an elongated spine to which 2 to 4 L12 dimers bind in a sequential fashion. Binds GTP-bound translation factors.

Its function is as follows. Forms part of the ribosomal stalk which helps the ribosome interact with GTP-bound translation factors. Is thus essential for accurate translation. This chain is Large ribosomal subunit protein bL12, found in Limosilactobacillus reuteri (strain DSM 20016) (Lactobacillus reuteri).